The primary structure comprises 263 residues: Small ribosomal subunit protein eS4 (263 aa).

Residues 42–105 (LPLIIFLRNR…GENFRLIYDV (64 aa)) form the S4 RNA-binding domain.

The protein belongs to the eukaryotic ribosomal protein eS4 family. Component of the small ribosomal subunit. Part of the small subunit (SSU) processome, composed of more than 70 proteins and the RNA chaperone small nucleolar RNA (snoRNA) U3.

It localises to the cytoplasm. The protein localises to the nucleus. The protein resides in the nucleolus. Functionally, component of the small ribosomal subunit. The ribosome is a large ribonucleoprotein complex responsible for the synthesis of proteins in the cell. Part of the small subunit (SSU) processome, first precursor of the small eukaryotic ribosomal subunit. During the assembly of the SSU processome in the nucleolus, many ribosome biogenesis factors, an RNA chaperone and ribosomal proteins associate with the nascent pre-rRNA and work in concert to generate RNA folding, modifications, rearrangements and cleavage as well as targeted degradation of pre-ribosomal RNA by the RNA exosome. In Danio rerio (Zebrafish), this protein is Small ribosomal subunit protein eS4 (rps4x).